Reading from the N-terminus, the 585-residue chain is Formate--tetrahydrofolate ligase (585 aa).

65–72 (TPHGEGKT) lines the ATP pocket.

This sequence belongs to the formate--tetrahydrofolate ligase family.

It carries out the reaction (6S)-5,6,7,8-tetrahydrofolate + formate + ATP = (6R)-10-formyltetrahydrofolate + ADP + phosphate. It functions in the pathway one-carbon metabolism; tetrahydrofolate interconversion. The polypeptide is Formate--tetrahydrofolate ligase (Shewanella baltica (strain OS155 / ATCC BAA-1091)).